We begin with the raw amino-acid sequence, 101 residues long: Chaperone modulatory protein CbpM (101 aa).

Belongs to the CbpM family.

In terms of biological role, interacts with CbpA and inhibits both the DnaJ-like co-chaperone activity and the DNA binding activity of CbpA. Together with CbpA, modulates the activity of the DnaK chaperone system. Does not inhibit the co-chaperone activity of DnaJ. The sequence is that of Chaperone modulatory protein CbpM from Pseudomonas putida (strain ATCC 700007 / DSM 6899 / JCM 31910 / BCRC 17059 / LMG 24140 / F1).